The primary structure comprises 415 residues: Phosphoglycerate kinase (415 aa).

(2R)-3-phosphoglycerate-binding residues include Val-22, Asp-23, Phe-24, Asn-25, Gln-37, Arg-38, Ser-61, His-62, Gly-64, Leu-120, Arg-121, His-168, and Arg-169. Position 212 (Gly-212) interacts with ADP. CDP is bound at residue Gly-212. Residues Ala-213 and Lys-214 each coordinate AMP. Ala-213 lines the ATP pocket. Residue Ala-213 coordinates Mg(2+). CDP is bound at residue Asp-217. Asp-217 contributes to the Mg(2+) binding site. AMP is bound at residue Lys-218. Residue Lys-218 coordinates ATP. Gly-236 serves as a coordination point for ADP. A CDP-binding site is contributed by Gly-236. AMP contacts are provided by Gly-237 and Gly-311. Residues Gly-237 and Gly-311 each contribute to the ATP site. Gly-336 and Phe-341 together coordinate CDP. ADP is bound at residue Phe-341. AMP is bound at residue Glu-342. The ATP site is built by Glu-342, Asp-373, and Thr-374. Asp-373 provides a ligand contact to Mg(2+).

The protein belongs to the phosphoglycerate kinase family. Monomer. Mg(2+) serves as cofactor.

The protein localises to the cytoplasm. It carries out the reaction (2R)-3-phosphoglycerate + ATP = (2R)-3-phospho-glyceroyl phosphate + ADP. It functions in the pathway carbohydrate degradation; glycolysis; pyruvate from D-glyceraldehyde 3-phosphate: step 2/5. The polypeptide is Phosphoglycerate kinase (PGK) (Opisthorchis sinensis (Clonorchis sinensis)).